Here is a 221-residue protein sequence, read N- to C-terminus: Probable septum site-determining protein MinC (221 aa).

The protein belongs to the MinC family. Interacts with MinD and FtsZ.

Its function is as follows. Cell division inhibitor that blocks the formation of polar Z ring septums. Rapidly oscillates between the poles of the cell to destabilize FtsZ filaments that have formed before they mature into polar Z rings. Prevents FtsZ polymerization. The protein is Probable septum site-determining protein MinC of Shewanella sp. (strain MR-7).